The following is a 251-amino-acid chain: NAD kinase (251 aa).

Aspartate 51 serves as the catalytic Proton acceptor. Residues 51–52 (DG), lysine 56, 113–114 (NE), lysine 124, histidine 140, aspartate 142, 153–158 (TGYSLS), and alanine 177 each bind NAD(+).

This sequence belongs to the NAD kinase family. A divalent metal cation is required as a cofactor.

Its subcellular location is the cytoplasm. It catalyses the reaction NAD(+) + ATP = ADP + NADP(+) + H(+). Its function is as follows. Involved in the regulation of the intracellular balance of NAD and NADP, and is a key enzyme in the biosynthesis of NADP. Catalyzes specifically the phosphorylation on 2'-hydroxyl of the adenosine moiety of NAD to yield NADP. The sequence is that of NAD kinase from Thermosipho melanesiensis (strain DSM 12029 / CIP 104789 / BI429).